The chain runs to 184 residues: Oligoribonuclease (184 aa).

An Exonuclease domain is found at 9 to 172; it reads LIWIDLEMTG…DDIRESIEEL (164 aa). Tyr-130 is a catalytic residue.

It belongs to the oligoribonuclease family.

Its subcellular location is the cytoplasm. 3'-to-5' exoribonuclease specific for small oligoribonucleotides. The sequence is that of Oligoribonuclease from Actinobacillus pleuropneumoniae serotype 5b (strain L20).